Consider the following 207-residue polypeptide: Varv peptide A/Kalata-B1 (207 aa).

Positions 1–20 (MKMFIVLVLSAAFALPAAFA) are cleaved as a signal peptide. A propeptide spanning residues 21-66 (TEQDVITLQAYEELLKNGAANGMTKTVISSPVLEEALVSYSKNKLG) is cleaved from the precursor. The cyclopeptide (Gly-Asn) cross-link spans 67 to 95 (GLPVCGETCVGGTCNTPGCSCSWPVCTRN). Cystine bridges form between C71-C85, C75-C87, and C80-C92. A propeptide spanning residues 96–120 (SLESTKSANPLLEEALTAFAKKGLG) is cleaved from the precursor. The segment at residues 121-149 (GLPVCGETCVGGTCNTPGCTCSWPVCTRN) is a cross-link (cyclopeptide (Gly-Asn)). 3 disulfides stabilise this stretch: C125–C139, C129–C141, and C134–C146. Positions 150–174 (ALETQKPNHLLEEALVAFAKKGNLG) are excised as a propeptide. The cyclopeptide (Gly-Asn) cross-link spans 175-203 (GLPVCGETCVGGTCNTPGCSCSWPVCTRN). Disulfide bonds link C179–C193, C183–C195, and C188–C200. Positions 204-207 (ALAM) are excised as a propeptide.

Belongs to the cyclotide family. Moebius subfamily. Varv peptide A and kalata-B1 are cyclic peptides.

Functionally, probably participates in a plant defense mechanism. Has hemolytic activity. The protein is Varv peptide A/Kalata-B1 of Viola odorata (Sweet violet).